Here is a 215-residue protein sequence, read N- to C-terminus: Cytochrome b6 (215 aa).

Residues 32-52 (IFYCLGGITLTCFLVQVATGF) form a helical membrane-spanning segment. Residue Cys35 participates in heme c binding. Residues His86 and His100 each contribute to the heme b site. The next 3 helical transmembrane spans lie at 90–110 (ASMM…TGGF), 116–136 (LTWV…VTGY), and 186–206 (LHTF…FLMI). His187 and His202 together coordinate heme b.

This sequence belongs to the cytochrome b family. PetB subfamily. As to quaternary structure, the 4 large subunits of the cytochrome b6-f complex are cytochrome b6, subunit IV (17 kDa polypeptide, PetD), cytochrome f and the Rieske protein, while the 4 small subunits are PetG, PetL, PetM and PetN. The complex functions as a dimer. It depends on heme b as a cofactor. Heme c is required as a cofactor.

It is found in the plastid. Its subcellular location is the chloroplast thylakoid membrane. Its function is as follows. Component of the cytochrome b6-f complex, which mediates electron transfer between photosystem II (PSII) and photosystem I (PSI), cyclic electron flow around PSI, and state transitions. This chain is Cytochrome b6, found in Nicotiana tabacum (Common tobacco).